We begin with the raw amino-acid sequence, 679 residues long: Methionine--tRNA ligase (679 aa).

The 'HIGH' region signature appears at 12-22 (PYANGAIHLGH). 4 residues coordinate Zn(2+): C143, C146, C156, and C159. The 'KMSKS' region signature appears at 328 to 332 (KMSKS). ATP is bound at residue K331. Positions 577-679 (DFAKLDLRVA…EGIRPGMQVK (103 aa)) constitute a tRNA-binding domain.

The protein belongs to the class-I aminoacyl-tRNA synthetase family. MetG type 1 subfamily. As to quaternary structure, homodimer. Requires Zn(2+) as cofactor.

It is found in the cytoplasm. The enzyme catalyses tRNA(Met) + L-methionine + ATP = L-methionyl-tRNA(Met) + AMP + diphosphate. In terms of biological role, is required not only for elongation of protein synthesis but also for the initiation of all mRNA translation through initiator tRNA(fMet) aminoacylation. In Actinobacillus pleuropneumoniae serotype 5b (strain L20), this protein is Methionine--tRNA ligase.